A 589-amino-acid polypeptide reads, in one-letter code: CTP synthase (589 aa).

Positions 1 to 281 (MPQSRTHSRT…DAYVVRQLGL (281 aa)) are amidoligase domain. Ser-23 serves as a coordination point for CTP. Ser-23 contacts UTP. Residues 24 to 29 (SLGKGL) and Asp-81 each bind ATP. Residues Asp-81 and Glu-155 each contribute to the Mg(2+) site. Residues 162–164 (DIE), 202–207 (KTKPTQ), and Lys-238 each bind CTP. UTP contacts are provided by residues 202-207 (KTKPTQ) and Lys-238. In terms of domain architecture, Glutamine amidotransferase type-1 spans 306–554 (RIALVGKYVD…VDAALRHKLE (249 aa)). Residue Gly-369 coordinates L-glutamine. Residue Cys-396 is the Nucleophile; for glutamine hydrolysis of the active site. Residues 397 to 400 (LGLQ), Glu-419, and Arg-480 contribute to the L-glutamine site. Catalysis depends on residues His-527 and Glu-529. A disordered region spans residues 562 to 589 (HGEERAAADDEIAESADRDEVASVDSAG).

This sequence belongs to the CTP synthase family. As to quaternary structure, homotetramer.

The enzyme catalyses UTP + L-glutamine + ATP + H2O = CTP + L-glutamate + ADP + phosphate + 2 H(+). It carries out the reaction L-glutamine + H2O = L-glutamate + NH4(+). The catalysed reaction is UTP + NH4(+) + ATP = CTP + ADP + phosphate + 2 H(+). It functions in the pathway pyrimidine metabolism; CTP biosynthesis via de novo pathway; CTP from UDP: step 2/2. Its activity is regulated as follows. Allosterically activated by GTP, when glutamine is the substrate; GTP has no effect on the reaction when ammonia is the substrate. The allosteric effector GTP functions by stabilizing the protein conformation that binds the tetrahedral intermediate(s) formed during glutamine hydrolysis. Inhibited by the product CTP, via allosteric rather than competitive inhibition. In terms of biological role, catalyzes the ATP-dependent amination of UTP to CTP with either L-glutamine or ammonia as the source of nitrogen. Regulates intracellular CTP levels through interactions with the four ribonucleotide triphosphates. This Rhodococcus opacus (strain B4) protein is CTP synthase.